We begin with the raw amino-acid sequence, 238 residues long: Fatty acid metabolism regulator protein (238 aa).

Residues 6-74 (KGPASFAEKY…HGKPTRVNNF (69 aa)) form the HTH gntR-type domain. Residues 34–53 (ERELSELIGVTRTTLREVLQ) constitute a DNA-binding region (H-T-H motif).

As to quaternary structure, homodimer.

Its subcellular location is the cytoplasm. Multifunctional regulator of fatty acid metabolism. The protein is Fatty acid metabolism regulator protein of Shewanella baltica (strain OS155 / ATCC BAA-1091).